Here is a 292-residue protein sequence, read N- to C-terminus: Probable ABC transporter phosphonate/phosphite binding protein PhnD2 (292 aa).

Positions 1-20 (MKLKSLLSVFTISIVALTSA) are cleaved as a signal peptide. Residue Cys-21 is the site of N-palmitoyl cysteine attachment. Residue Cys-21 is the site of S-diacylglycerol cysteine attachment.

This sequence belongs to the phosphate/phosphite/phosphonate binding protein family. In terms of assembly, the complex may be composed of two ATP-binding proteins (PhnC2), two transmembrane proteins (PhnE2) and a solute-binding protein (PhnD2).

The protein localises to the cell membrane. Its function is as follows. Probably part of the ABC transporter complex PhnC2D2E2. Binds strongly to methylphosphonate (MPn), ethylphosphonate (EPn) and inorganic phosphite. The protein is Probable ABC transporter phosphonate/phosphite binding protein PhnD2 of Prochlorococcus marinus (strain MIT 9301).